The chain runs to 317 residues: Beta-ketoacyl-[acyl-carrier-protein] synthase III (317 aa).

Active-site residues include C112 and H244. The interval 245 to 249 is ACP-binding; it reads QANIR. N274 is a catalytic residue.

Belongs to the thiolase-like superfamily. FabH family. As to quaternary structure, homodimer.

Its subcellular location is the cytoplasm. It catalyses the reaction malonyl-[ACP] + acetyl-CoA + H(+) = 3-oxobutanoyl-[ACP] + CO2 + CoA. The protein operates within lipid metabolism; fatty acid biosynthesis. Functionally, catalyzes the condensation reaction of fatty acid synthesis by the addition to an acyl acceptor of two carbons from malonyl-ACP. Catalyzes the first condensation reaction which initiates fatty acid synthesis and may therefore play a role in governing the total rate of fatty acid production. Possesses both acetoacetyl-ACP synthase and acetyl transacylase activities. Its substrate specificity determines the biosynthesis of branched-chain and/or straight-chain of fatty acids. The protein is Beta-ketoacyl-[acyl-carrier-protein] synthase III of Rickettsia typhi (strain ATCC VR-144 / Wilmington).